The primary structure comprises 519 residues: NADH-ubiquinone oxidoreductase chain 4 (519 aa).

The next 14 membrane-spanning stretches (helical) occupy residues Ser2–Phe22, Ile68–Asp88, Val112–Ile132, Leu146–Leu166, Leu167–Gly187, Phe196–Met216, Ile239–Asn259, Pro270–Phe290, Tyr304–Leu324, Ile333–Ile353, Ile360–Val380, Val399–Leu419, Leu437–Tyr457, and Phe484–Ile504.

Belongs to the complex I subunit 4 family.

It is found in the mitochondrion membrane. It catalyses the reaction a ubiquinone + NADH + 5 H(+)(in) = a ubiquinol + NAD(+) + 4 H(+)(out). Core subunit of the mitochondrial membrane respiratory chain NADH dehydrogenase (Complex I) that is believed to belong to the minimal assembly required for catalysis. Complex I functions in the transfer of electrons from NADH to the respiratory chain. The immediate electron acceptor for the enzyme is believed to be ubiquinone. The polypeptide is NADH-ubiquinone oxidoreductase chain 4 (ND4) (Podospora anserina (strain S / ATCC MYA-4624 / DSM 980 / FGSC 10383) (Pleurage anserina)).